Reading from the N-terminus, the 430-residue chain is Serine hydroxymethyltransferase (430 aa).

(6S)-5,6,7,8-tetrahydrofolate is bound by residues Leu123 and 127-129 (GHL). Lys232 is subject to N6-(pyridoxal phosphate)lysine. Residue Glu248 coordinates (6S)-5,6,7,8-tetrahydrofolate.

Belongs to the SHMT family. In terms of assembly, homodimer. It depends on pyridoxal 5'-phosphate as a cofactor.

Its subcellular location is the cytoplasm. It carries out the reaction (6R)-5,10-methylene-5,6,7,8-tetrahydrofolate + glycine + H2O = (6S)-5,6,7,8-tetrahydrofolate + L-serine. It functions in the pathway one-carbon metabolism; tetrahydrofolate interconversion. Its pathway is amino-acid biosynthesis; glycine biosynthesis; glycine from L-serine: step 1/1. Functionally, catalyzes the reversible interconversion of serine and glycine with tetrahydrofolate (THF) serving as the one-carbon carrier. This reaction serves as the major source of one-carbon groups required for the biosynthesis of purines, thymidylate, methionine, and other important biomolecules. Also exhibits THF-independent aldolase activity toward beta-hydroxyamino acids, producing glycine and aldehydes, via a retro-aldol mechanism. This chain is Serine hydroxymethyltransferase, found in Anaplasma marginale (strain Florida).